Reading from the N-terminus, the 1188-residue chain is DNA-directed RNA polymerase subunit beta (1188 aa).

The protein belongs to the RNA polymerase beta chain family. In terms of assembly, the RNAP catalytic core consists of 2 alpha, 1 beta, 1 beta' and 1 omega subunit. When a sigma factor is associated with the core the holoenzyme is formed, which can initiate transcription.

It carries out the reaction RNA(n) + a ribonucleoside 5'-triphosphate = RNA(n+1) + diphosphate. Its function is as follows. DNA-dependent RNA polymerase catalyzes the transcription of DNA into RNA using the four ribonucleoside triphosphates as substrates. In Streptococcus pyogenes serotype M3 (strain ATCC BAA-595 / MGAS315), this protein is DNA-directed RNA polymerase subunit beta.